Reading from the N-terminus, the 44-residue chain is MKVLSSLKSAKQRAGCQVVKRKGRVFVICKENPRFKAVQGMKKK.

This sequence belongs to the bacterial ribosomal protein bL36 family.

This Pseudoalteromonas translucida (strain TAC 125) protein is Large ribosomal subunit protein bL36.